A 310-amino-acid polypeptide reads, in one-letter code: tRNA pseudouridine synthase B (310 aa).

D49 (nucleophile) is an active-site residue.

It belongs to the pseudouridine synthase TruB family. Type 1 subfamily.

The catalysed reaction is uridine(55) in tRNA = pseudouridine(55) in tRNA. Functionally, responsible for synthesis of pseudouridine from uracil-55 in the psi GC loop of transfer RNAs. In Sinorhizobium medicae (strain WSM419) (Ensifer medicae), this protein is tRNA pseudouridine synthase B.